Here is a 202-residue protein sequence, read N- to C-terminus: Superoxide dismutase [Fe] (202 aa).

Residues His-27, His-82, Asp-164, and His-168 each coordinate Fe cation.

Belongs to the iron/manganese superoxide dismutase family. As to quaternary structure, homodimer. Requires Fe cation as cofactor.

The enzyme catalyses 2 superoxide + 2 H(+) = H2O2 + O2. In terms of biological role, destroys superoxide anion radicals which are normally produced within the cells and which are toxic to biological systems. The polypeptide is Superoxide dismutase [Fe] (sodA) (Enterococcus faecalis (strain ATCC 700802 / V583)).